The following is a 458-amino-acid chain: Ammonium transporter Rh type B (458 aa).

The Cytoplasmic segment spans residues 1-13; it reads MAGSPSRAAGRRL. The chain crosses the membrane as a helical span at residues 14 to 34; sequence QLPLLCLFLQGATAVLFAVFV. The Extracellular portion of the chain corresponds to 35-61; that stretch reads RYNHKTDAALWHRSNHSNADNEFYFRY. Residue Asn-49 is glycosylated (N-linked (GlcNAc...) asparagine). A helical transmembrane segment spans residues 62–82; it reads PSFQDVHAMVFVGFGFLMVFL. Topologically, residues 83–86 are cytoplasmic; sequence QRYG. A helical membrane pass occupies residues 87–107; the sequence is FSSVGFTFLLAAFALQWSTLV. Residues 108–124 are Extracellular-facing; that stretch reads QGFLHSFHGGHIHVGVE. Residues 125–145 form a helical membrane-spanning segment; the sequence is SMINADFCAGAVLISFGAVLG. Over 146–149 the chain is Cytoplasmic; the sequence is KTGP. Residues 150 to 170 traverse the membrane as a helical segment; it reads TQLLLMALLEVVLFGINEFVL. Topologically, residues 171-178 are extracellular; sequence LHLLGVRD. A helical membrane pass occupies residues 179-201; sequence AGGSMTIHTFGAYFGLVLSRVLY. Over 202 to 219 the chain is Cytoplasmic; sequence RPQLEKSKHRQGSVYHSD. The chain crosses the membrane as a helical span at residues 220–240; the sequence is LFAMIGTIFLWIFWPSFNAAL. Residues 241–251 are Extracellular-facing; sequence TALGAGQHRTA. A helical transmembrane segment spans residues 252–272; it reads LNTYYSLAASTLGTFALSALV. Residues 273–282 lie on the Cytoplasmic side of the membrane; sequence GEDGRLDMVH. A helical membrane pass occupies residues 283–303; that stretch reads IQNAALAGGVVVGTSSEMMLT. Residue Pro-304 is a topological domain, extracellular. The chain crosses the membrane as a helical span at residues 305–325; that stretch reads FGALAAGFLAGTVSTLGYKFF. The Cytoplasmic portion of the chain corresponds to 326-346; the sequence is TPILESKFKVQDTCGVHNLHG. A helical membrane pass occupies residues 347–367; that stretch reads MPGVLGALLGVLVAGLATHEA. The Extracellular portion of the chain corresponds to 368-393; sequence YGDGLESVFPLIAEGQRSATSQAMHQ. A helical membrane pass occupies residues 394 to 414; sequence LFGLFVTLMFASVGGGLGGLL. At 415 to 458 the chain is on the cytoplasmic side; the sequence is LKLPFLDSPPDSQHYEDQVHWQVPGEHEDKAQRPLRVEEADTQA. The interaction with ANK3 stretch occupies residues 416 to 424; the sequence is KLPFLDSPP. The tract at residues 436–458 is disordered; it reads QVPGEHEDKAQRPLRVEEADTQA.

It belongs to the ammonium transporter (TC 2.A.49) family. Rh subfamily. Interacts (via C-terminus) with ANK2 and ANK3; required for targeting to the basolateral membrane. N-glycosylated. As to expression, specifically expressed in kidney. Also detected in liver and ovary.

The protein resides in the cell membrane. The protein localises to the basolateral cell membrane. It carries out the reaction NH4(+)(in) = NH4(+)(out). The enzyme catalyses methylamine(out) = methylamine(in). The catalysed reaction is CO2(out) = CO2(in). Its function is as follows. Ammonium transporter involved in the maintenance of acid-base homeostasis. Transports ammonium and its related derivative methylammonium across the basolateral plasma membrane of epithelial cells likely contributing to renal transepithelial ammonia transport and ammonia metabolism. May transport either NH4(+) or NH3 ammonia species predominantly mediating an electrogenic NH4(+) transport. May act as a CO2 channel providing for renal acid secretion. The protein is Ammonium transporter Rh type B of Homo sapiens (Human).